A 181-amino-acid polypeptide reads, in one-letter code: Peptide deformylase (181 aa).

The Fe cation site is built by C99 and H141. Residue E142 is part of the active site. H145 is a Fe cation binding site.

This sequence belongs to the polypeptide deformylase family. Fe(2+) serves as cofactor.

It catalyses the reaction N-terminal N-formyl-L-methionyl-[peptide] + H2O = N-terminal L-methionyl-[peptide] + formate. Functionally, removes the formyl group from the N-terminal Met of newly synthesized proteins. Requires at least a dipeptide for an efficient rate of reaction. N-terminal L-methionine is a prerequisite for activity but the enzyme has broad specificity at other positions. In Chlamydia trachomatis serovar A (strain ATCC VR-571B / DSM 19440 / HAR-13), this protein is Peptide deformylase.